Here is a 362-residue protein sequence, read N- to C-terminus: Class I histocompatibility antigen, Gogo-B*0101 alpha chain (362 aa).

The N-terminal stretch at 1-24 (MRVTAPRTLLLLLSAALALTETWA) is a signal peptide. Residues 25-114 (GSHSMRYFDT…ALRYYNQSEA (90 aa)) are alpha-1. Residues 25–308 (GSHSMRYFDT…EPSSQSTIPI (284 aa)) lie on the Extracellular side of the membrane. An N-linked (GlcNAc...) asparagine glycan is attached at Asn-110. Positions 115-206 (GSHTIQRMFG…ENGRETLQRA (92 aa)) are alpha-2. 2 disulfide bridges follow: Cys-125–Cys-188 and Cys-227–Cys-283. Residues 207–298 (DTPKTHVTHH…GLPKPLTLRW (92 aa)) form an alpha-3 region. One can recognise an Ig-like C1-type domain in the interval 209–295 (PKTHVTHHPI…QHEGLPKPLT (87 aa)). Positions 299-308 (EPSSQSTIPI) are connecting peptide. A helical transmembrane segment spans residues 309–332 (VGIVAGLAVLAVVVIGAVVTAVIC). Residues 333-362 (RRKSSGGKGGSYSQAASSDSAQGSDVSLTA) lie on the Cytoplasmic side of the membrane. The interval 335-362 (KSSGGKGGSYSQAASSDSAQGSDVSLTA) is disordered. Over residues 343-362 (SYSQAASSDSAQGSDVSLTA) the composition is skewed to low complexity. Ser-356 and Ser-359 each carry phosphoserine.

This sequence belongs to the MHC class I family. As to quaternary structure, heterodimer of an alpha chain and a beta chain (beta-2-microglobulin).

It localises to the membrane. In terms of biological role, involved in the presentation of foreign antigens to the immune system. In Gorilla gorilla gorilla (Western lowland gorilla), this protein is Class I histocompatibility antigen, Gogo-B*0101 alpha chain.